A 1238-amino-acid chain; its full sequence is MSFFLGQILEKMGSIDKDIRFMATHDLANELEKDTFKMDPTYENKIVTKLLALTADSANNVQENVVKCLGLLIKRVKDSQATEIIDTLSKNILEESNKEELVEISGIGLKTIITNLPSEGSSISTLVIKNLVPKLLIGIDSEKLKDKNEIKMSCLDILNDLLQKYGSFMIGDLENIQKVVLPKLNATRPAIRKRAILCLANIAFPSPDNLFNSLLDYIIKSIEEAKKPDHISTLIQAIGAICKSSGYRLGKYLPKVMPHVLNYCDNNKFEQNDELRENCLLCFEAIIEKCQKDVTPYIGEIITLCTKYIKFDPNYSDDGEGEEDGDEEEEEMETSGDNDEEQEEEEEEEDLSDDDDISWKIRRSSCKTLCAIISTRPELLVELYQKVAPVLYNRFKEREENVRLDIFTTFVLLLKQLNKKLANPQAKEVLKQQVPKLVQSISKSLIDKSIRTRVGAIALLKELVMIIPGSLTGQVSQIVNGINLSLSEKNTNSNLKIEALVLLKLLLINEPAQSFQSHITSLSTHIVKCINDSYYRIASEALRVCQEFVIVFNKIRSSTDCKPIISNLFAANFVQLKAQDIDQEVKEAAISSIGTIITLFGNEIQSELQPCLSILLERLDNELTRVVTVKVLSRIINSSINIDLSSILPSAIKLLSTFLRKNNRVLKQSSLIALNDIVKVCPNLLPSSLLTGILTEMATLINESDLQITHLAFVFIQNLLKNYSEKHQAATLVNEKCIPPTLALLKSSLLQGVALESLLSLFATIVQLDEPGMKYEQLLTLLFNTAADIKQPVTRQSFHSISQCIAVITVNTTPALRKQTIHNLICNLSSVNEPLVLLSLSCLGEIGRRIDIHENENLQESVYKTFEANNEEIKQVAALCLGDIAVCSLQSYLPFILEQIKNQPKKQYLLLHTLRETIVKLSHTDEGIKTIHPFLQSILPLLFDNCVNEEEGTRNIVAECLGKLSMIEPNEIIPKLVEKIKSPSPLERSTIVTSIKFSIMENKEVVDQYLAPNISQFLSLLHDGDLIVRRSALLSLNYIAHNKPNLIRNDLSVYLPILYNNAKIKPELIREVDLGPFKHKVDDGIEIRKTAFECMYTLLDTSIDKIDVAPFIVSLCDGLKDTQYDIKLLCHLMIIRLANSNGAALLENITLLLEPLRVILMTKVNETAVKQQIERNEECIRSALRAVASISRIPNSDSIVKFEEFVKNTIRTTPLAAQFNSILSEDTMSNQDSMDTSN.

HEAT repeat units lie at residues 41–78, 126–167, 171–208, 210–247, and 251–292; these read TYENKIVTKLLALTADSANNVQENVVKCLGLLIKRVKD, LVIK…KYGS, GDLENIQKVVLPKLNATRPAIRKRAILCLANIAFPSPD, LFNSLLDYIIKSIEEAKKPDHISTLIQAIGAICKSSGY, and KYLP…KCQK. Residues 315–354 are disordered; that stretch reads YSDDGEGEEDGDEEEEEMETSGDNDEEQEEEEEEEDLSDD. 9 HEAT repeats span residues 382 to 419, 432 to 469, 603 to 641, 646 to 683, 688 to 725, 853 to 890, 933 to 966, 967 to 1004, and 1008 to 1045; these read ELYQKVAPVLYNRFKEREENVRLDIFTTFVLLLKQLNK, QQVPKLVQSISKSLIDKSIRTRVGAIALLKELVMIIPG, EIQSELQPCLSILLERLDNELTRVVTVKVLSRIINSSIN, SILPSAIKLLSTFLRKNNRVLKQSSLIALNDIVKVCPN, SLLTGILTEMATLINESDLQITHLAFVFIQNLLKNYSE, HENENLQESVYKTFEANNEEIKQVAALCLGDIAVCSLQ, PFLQSILPLLFDNCVNEEEGTRNIVAECLGKLSM, IEPNEIIPKLVEKIKSPSPLERSTIVTSIKFSIMENKE, and QYLAPNISQFLSLLHDGDLIVRRSALLSLNYIAHNKPN.

The protein belongs to the CAND family.

The protein localises to the nucleus. Its function is as follows. Key assembly factor of SCF (SKP1-CUL1-F-box protein) E3 ubiquitin ligase complexes that promotes the exchange of the substrate-recognition F-box subunit in SCF complexes, thereby playing a key role in the cellular repertoire of SCF complexes. Acts as a F-box protein exchange factor. The polypeptide is Cullin-associated NEDD8-dissociated protein 1 (cand1) (Dictyostelium discoideum (Social amoeba)).